The primary structure comprises 119 residues: Dihydroneopterin aldolase (119 aa).

Substrate-binding positions include E21, Y53, and 72–73 (ID). The active-site Proton donor/acceptor is K99.

This sequence belongs to the DHNA family.

It catalyses the reaction 7,8-dihydroneopterin = 6-hydroxymethyl-7,8-dihydropterin + glycolaldehyde. Its pathway is cofactor biosynthesis; tetrahydrofolate biosynthesis; 2-amino-4-hydroxy-6-hydroxymethyl-7,8-dihydropteridine diphosphate from 7,8-dihydroneopterin triphosphate: step 3/4. Its function is as follows. Catalyzes the conversion of 7,8-dihydroneopterin to 6-hydroxymethyl-7,8-dihydropterin. This chain is Dihydroneopterin aldolase (folB), found in Streptococcus pyogenes.